Here is a 291-residue protein sequence, read N- to C-terminus: Diaminopimelate epimerase (291 aa).

Substrate-binding residues include Asn17, Gln50, and Asn70. Cys79 acts as the Proton donor in catalysis. Substrate is bound by residues 80 to 81 (GN), Asn167, Asn200, and 218 to 219 (ER). The active-site Proton acceptor is Cys227. 228 to 229 (GS) is a substrate binding site.

This sequence belongs to the diaminopimelate epimerase family. Homodimer.

It localises to the cytoplasm. The catalysed reaction is (2S,6S)-2,6-diaminopimelate = meso-2,6-diaminopimelate. It functions in the pathway amino-acid biosynthesis; L-lysine biosynthesis via DAP pathway; DL-2,6-diaminopimelate from LL-2,6-diaminopimelate: step 1/1. Its function is as follows. Catalyzes the stereoinversion of LL-2,6-diaminopimelate (L,L-DAP) to meso-diaminopimelate (meso-DAP), a precursor of L-lysine and an essential component of the bacterial peptidoglycan. In Bradyrhizobium diazoefficiens (strain JCM 10833 / BCRC 13528 / IAM 13628 / NBRC 14792 / USDA 110), this protein is Diaminopimelate epimerase.